The sequence spans 160 residues: Transcription elongation factor GreA (160 aa).

Residues 1–72 (MAEKTYPMTQ…QIQILETKIR (72 aa)) are a coiled coil.

Belongs to the GreA/GreB family.

Its function is as follows. Necessary for efficient RNA polymerase transcription elongation past template-encoded arresting sites. The arresting sites in DNA have the property of trapping a certain fraction of elongating RNA polymerases that pass through, resulting in locked ternary complexes. Cleavage of the nascent transcript by cleavage factors such as GreA or GreB allows the resumption of elongation from the new 3'terminus. GreA releases sequences of 2 to 3 nucleotides. The chain is Transcription elongation factor GreA from Streptococcus agalactiae serotype Ia (strain ATCC 27591 / A909 / CDC SS700).